We begin with the raw amino-acid sequence, 868 residues long: Translation initiation factor IF-2 (868 aa).

Disordered regions lie at residues 158–178 (VKEE…DELT) and 200–269 (KKEE…KYRE). Basic and acidic residues predominate over residues 200-209 (KKEEVKPEKV). The span at 249 to 260 (RGGRSKFKKKKG) shows a compositional bias: basic residues. In terms of domain architecture, tr-type G spans 368-537 (GRAPVVTIMG…LLQSEVLELK (170 aa)). Residues 377–384 (GHVDHGKT) are G1. 377–384 (GHVDHGKT) lines the GTP pocket. The tract at residues 402–406 (GITQH) is G2. The interval 423–426 (DTPG) is G3. Residues 423–427 (DTPGH) and 477–480 (NKMD) contribute to the GTP site. The interval 477-480 (NKMD) is G4. The interval 513–515 (SAK) is G5.

It belongs to the TRAFAC class translation factor GTPase superfamily. Classic translation factor GTPase family. IF-2 subfamily.

It is found in the cytoplasm. In terms of biological role, one of the essential components for the initiation of protein synthesis. Protects formylmethionyl-tRNA from spontaneous hydrolysis and promotes its binding to the 30S ribosomal subunits. Also involved in the hydrolysis of GTP during the formation of the 70S ribosomal complex. The sequence is that of Translation initiation factor IF-2 from Legionella pneumophila (strain Lens).